A 586-amino-acid chain; its full sequence is Estrogen receptor (586 aa).

Positions 1–179 (MTMPLPNKTT…SMESTKETRY (179 aa)) are modulating. Residues 144 to 173 (FYRSSSDNRRQSGRERMSSANDKGPPSMES) are disordered. Basic and acidic residues predominate over residues 149-160 (SDNRRQSGRERM). 2 consecutive NR C4-type zinc fingers follow at residues 180-200 (CAVC…CEGC) and 216-240 (CPAT…LRKC). The segment at residues 180–245 (CAVCSDYASG…RLRKCYEVGM (66 aa)) is a DNA-binding region (nuclear receptor). Residues 246-302 (MKGGIRKDRRGGRLLKHKRQKEEQEQKNDVDPSEIRTASIWVNPSVKSMKLSPVLSL) form a hinge region. A compositionally biased stretch (basic residues) spans 252-264 (KDRRGGRLLKHKR). The interval 252-276 (KDRRGGRLLKHKRQKEEQEQKNDVD) is disordered. The segment covering 265 to 276 (QKEEQEQKNDVD) has biased composition (basic and acidic residues). Residues 303 to 539 (TAEQLISALM…DLLLEMLDAH (237 aa)) enclose the NR LBD domain. Over residues 543-556 (TPKDKTTTQEEDSR) the composition is skewed to basic and acidic residues. Residues 543 to 569 (TPKDKTTTQEEDSRSPPTTTVNGASPC) form a disordered region.

Belongs to the nuclear hormone receptor family. NR3 subfamily. Binds DNA as a homodimer. Can form a heterodimer with ER-beta.

Its subcellular location is the nucleus. In terms of biological role, the steroid hormones and their receptors are involved in the regulation of eukaryotic gene expression and affect cellular proliferation and differentiation in target tissues. The chain is Estrogen receptor (esr1) from Xenopus laevis (African clawed frog).